A 569-amino-acid chain; its full sequence is Proline--tRNA ligase (569 aa).

Belongs to the class-II aminoacyl-tRNA synthetase family. ProS type 1 subfamily. As to quaternary structure, homodimer.

It is found in the cytoplasm. The enzyme catalyses tRNA(Pro) + L-proline + ATP = L-prolyl-tRNA(Pro) + AMP + diphosphate. Functionally, catalyzes the attachment of proline to tRNA(Pro) in a two-step reaction: proline is first activated by ATP to form Pro-AMP and then transferred to the acceptor end of tRNA(Pro). As ProRS can inadvertently accommodate and process non-cognate amino acids such as alanine and cysteine, to avoid such errors it has two additional distinct editing activities against alanine. One activity is designated as 'pretransfer' editing and involves the tRNA(Pro)-independent hydrolysis of activated Ala-AMP. The other activity is designated 'posttransfer' editing and involves deacylation of mischarged Ala-tRNA(Pro). The misacylated Cys-tRNA(Pro) is not edited by ProRS. This chain is Proline--tRNA ligase, found in Campylobacter jejuni subsp. jejuni serotype O:2 (strain ATCC 700819 / NCTC 11168).